The primary structure comprises 193 residues: Sorting nexin-22 (193 aa).

Residues 1 to 21 (MLEVHIPSVGPEAEGPRQSPE) are disordered. Positions 1 to 118 (MLEVHIPSVG…HFPTDPKASN (118 aa)) constitute a PX domain. Positions 43, 45, 66, and 79 each coordinate a 1,2-diacyl-sn-glycero-3-phospho-(1D-myo-inositol-3-phosphate).

This sequence belongs to the sorting nexin family. In terms of assembly, (Microbial infection) Interacts with P.falciparum (strain 3D7) CK1. In terms of tissue distribution, expressed in erythrocytes (at protein level).

Its subcellular location is the cytoplasmic vesicle membrane. May be involved in several stages of intracellular trafficking. Interacts with membranes containing phosphatidylinositol 3-phosphate (PtdIns(3P)). This is Sorting nexin-22 (SNX22) from Homo sapiens (Human).